The following is a 183-amino-acid chain: Peptidyl-tRNA hydrolase (183 aa).

A tRNA-binding site is contributed by Tyr14. The Proton acceptor role is filled by His19. Tyr60 and Asn62 together coordinate tRNA.

It belongs to the PTH family. As to quaternary structure, monomer.

It is found in the cytoplasm. It catalyses the reaction an N-acyl-L-alpha-aminoacyl-tRNA + H2O = an N-acyl-L-amino acid + a tRNA + H(+). Hydrolyzes ribosome-free peptidyl-tRNAs (with 1 or more amino acids incorporated), which drop off the ribosome during protein synthesis, or as a result of ribosome stalling. Its function is as follows. Catalyzes the release of premature peptidyl moieties from peptidyl-tRNA molecules trapped in stalled 50S ribosomal subunits, and thus maintains levels of free tRNAs and 50S ribosomes. This is Peptidyl-tRNA hydrolase from Mycoplasmoides gallisepticum (strain R(low / passage 15 / clone 2)) (Mycoplasma gallisepticum).